The sequence spans 359 residues: Protein mab-21-like 2-B (359 aa).

This sequence belongs to the mab-21 family.

The protein resides in the nucleus. It localises to the cytoplasm. Functionally, required for several aspects of embryonic development including normal development of the eye. The chain is Protein mab-21-like 2-B (mab21l2-b) from Xenopus laevis (African clawed frog).